We begin with the raw amino-acid sequence, 282 residues long: F-box protein VBF (282 aa).

Residues 1–44 (MMMLPEACIANILAFTSPADAFSSSEVSSVFRLAGDSDFVWEKF) form the F-box domain.

As to quaternary structure, component of SCF(VBF) E3 ubiquitin ligase complex that interacts with VIP1. Interacts directly with SKP1A and VIP1. Forms a complex composed of VIP1, VBF and Agrobacterium virE2.

In terms of biological role, component of SCF(VBF) E3 ubiquitin ligase complexes, which mediate the ubiquitination and subsequent proteasomal degradation of target proteins such as VIP1 and Agrobacterium virE2, after their implication in T-DNA translocation to the host nucleus (can functionally replace Agrobacterium VirF). Required during Agrobacterium-induced tumor formation. In Arabidopsis thaliana (Mouse-ear cress), this protein is F-box protein VBF (VBF).